The following is a 118-amino-acid chain: UPF0102 protein Lxx14785 (118 aa).

The protein belongs to the UPF0102 family.

This Leifsonia xyli subsp. xyli (strain CTCB07) protein is UPF0102 protein Lxx14785.